The sequence spans 478 residues: uncharacterized protein (478 aa).

An ATP-grasp domain is found at 174-366; sequence RQVLAAAGVP…LIGEHIKLAI (193 aa). 214-219 is a binding site for ATP; the sequence is GSGSRG. Arginine 339 is a catalytic residue.

This is an uncharacterized protein from Sinorhizobium fredii (strain NBRC 101917 / NGR234).